Here is a 572-residue protein sequence, read N- to C-terminus: Acyl-coenzyme A synthetase ACSM2, mitochondrial (572 aa).

The N-terminal 46 residues, 1-46, are a transit peptide targeting the mitochondrion; it reads MHWLWKIPRLCTFWGTEMFHRTFHMNIKKLMPIQWGHQEVPAKFNF. Residue Q139 participates in CoA binding. Residues 221–229, 359–364, D446, and R461 contribute to the ATP site; these read TSGTSGPPK and EIYGQT. Residue T364 participates in substrate binding. 469-471 lines the CoA pocket; that stretch reads SGY. Residue R472 participates in substrate binding. CoA-binding positions include R501, K532, and 540-542; that span reads YPR. Residue K557 participates in ATP binding.

The protein belongs to the ATP-dependent AMP-binding enzyme family. Monomer. Mg(2+) serves as cofactor. The cofactor is Mn(2+). Detected in kidney, in proximal tubules.

It is found in the mitochondrion. The enzyme catalyses a medium-chain fatty acid + ATP + CoA = a medium-chain fatty acyl-CoA + AMP + diphosphate. The catalysed reaction is benzoate + ATP + CoA = benzoyl-CoA + AMP + diphosphate. It catalyses the reaction hexanoate + ATP + CoA = hexanoyl-CoA + AMP + diphosphate. It carries out the reaction butanoate + ATP + CoA = butanoyl-CoA + AMP + diphosphate. The enzyme catalyses octanoate + ATP + CoA = octanoyl-CoA + AMP + diphosphate. The catalysed reaction is decanoate + ATP + CoA = decanoyl-CoA + AMP + diphosphate. Functionally, catalyzes the activation of fatty acids by CoA to produce an acyl-CoA, the first step in fatty acid metabolism. Capable of activating medium-chain fatty acids (e.g. butyric (C4) to decanoic (C10) acids), and certain carboxylate-containing xenobiotics, e.g. benzoate. The sequence is that of Acyl-coenzyme A synthetase ACSM2, mitochondrial (Acsm2) from Rattus norvegicus (Rat).